Reading from the N-terminus, the 170-residue chain is Tubulin polymerization-promoting protein family member 2 (170 aa).

A disordered region spans residues 127 to 170 (TGTHKERFDESGKGKGIAGREEMTDNTGYVSGYKGSGTYDKKTK). Over residues 129 to 149 (THKERFDESGKGKGIAGREEM) the composition is skewed to basic and acidic residues.

Belongs to the TPPP family. Expressed in spermatids. Detected in liver cancer (at protein level).

Its subcellular location is the cytoplasm. It localises to the cytosol. The protein resides in the cell projection. The protein localises to the cilium. It is found in the flagellum. In terms of biological role, probable regulator of microtubule dynamics required for sperm motility. In contrast to other members of the family, has no microtubule bundling activity. The sequence is that of Tubulin polymerization-promoting protein family member 2 from Homo sapiens (Human).